Reading from the N-terminus, the 157-residue chain is Regulatory protein RecX (157 aa).

The protein belongs to the RecX family.

Its subcellular location is the cytoplasm. Its function is as follows. Modulates RecA activity. In Leptothrix cholodnii (strain ATCC 51168 / LMG 8142 / SP-6) (Leptothrix discophora (strain SP-6)), this protein is Regulatory protein RecX.